Consider the following 270-residue polypeptide: Dermonecrotic toxin LhSicTox-alphaIA2aiii (270 aa).

His2 is an active-site residue. Mg(2+) contacts are provided by Glu22 and Asp24. The active-site Nucleophile is the His38. Cystine bridges form between Cys42–Cys48 and Cys44–Cys187. Asp82 serves as a coordination point for Mg(2+).

It belongs to the arthropod phospholipase D family. Class II subfamily. Mg(2+) is required as a cofactor. In terms of tissue distribution, expressed by the venom gland.

The protein localises to the secreted. It carries out the reaction an N-(acyl)-sphingosylphosphocholine = an N-(acyl)-sphingosyl-1,3-cyclic phosphate + choline. It catalyses the reaction an N-(acyl)-sphingosylphosphoethanolamine = an N-(acyl)-sphingosyl-1,3-cyclic phosphate + ethanolamine. The catalysed reaction is a 1-acyl-sn-glycero-3-phosphocholine = a 1-acyl-sn-glycero-2,3-cyclic phosphate + choline. The enzyme catalyses a 1-acyl-sn-glycero-3-phosphoethanolamine = a 1-acyl-sn-glycero-2,3-cyclic phosphate + ethanolamine. Dermonecrotic toxins cleave the phosphodiester linkage between the phosphate and headgroup of certain phospholipids (sphingolipid and lysolipid substrates), forming an alcohol (often choline) and a cyclic phosphate. This toxin acts on sphingomyelin (SM). It may also act on ceramide phosphoethanolamine (CPE), lysophosphatidylcholine (LPC) and lysophosphatidylethanolamine (LPE), but not on lysophosphatidylserine (LPS), and lysophosphatidylglycerol (LPG). It acts by transphosphatidylation, releasing exclusively cyclic phosphate products as second products. Induces dermonecrosis, hemolysis, increased vascular permeability, edema, inflammatory response, and platelet aggregation. This is Dermonecrotic toxin LhSicTox-alphaIA2aiii from Loxosceles hirsuta (Recluse spider).